A 160-amino-acid chain; its full sequence is uncharacterized protein (160 aa).

4 helical membrane passes run 7-27, 48-68, 95-115, and 121-141; these read IFLK…CIFL, LVFI…YQAF, AVTI…MAEI, and IIVI…FAAV.

The protein resides in the cell membrane. This is an uncharacterized protein from Bacillus subtilis (strain 168).